The following is a 277-amino-acid chain: Putative endonuclease (277 aa).

Its function is as follows. Putative endonuclease. This chain is Putative endonuclease, found in Escherichia coli (Enterobacteria phage T5).